The primary structure comprises 293 residues: Undecaprenyl-diphosphatase (293 aa).

7 helical membrane-spanning segments follow: residues 3-23, 43-63, 85-105, 109-129, 203-223, 238-258, and 269-289; these read IALA…EFLP, KGKI…CWEF, INVI…GKAI, LFNP…ILWA, VATE…TVYE, IFAV…RWLL, and FAWY…THLI.

It belongs to the UppP family.

The protein localises to the cell inner membrane. The catalysed reaction is di-trans,octa-cis-undecaprenyl diphosphate + H2O = di-trans,octa-cis-undecaprenyl phosphate + phosphate + H(+). Its function is as follows. Catalyzes the dephosphorylation of undecaprenyl diphosphate (UPP). Confers resistance to bacitracin. This Ralstonia pickettii (strain 12J) protein is Undecaprenyl-diphosphatase.